Consider the following 360-residue polypeptide: CFA/I fimbrial subunit E (360 aa).

It localises to the fimbrium. This chain is CFA/I fimbrial subunit E (cfaE), found in Escherichia coli.